The chain runs to 73 residues: Putative defensin-like protein 42 (73 aa).

Disulfide bonds link Cys6–Cys58, Cys18–Cys41, Cys27–Cys50, and Cys31–Cys52.

The protein belongs to the DEFL family.

In Arabidopsis thaliana (Mouse-ear cress), this protein is Putative defensin-like protein 42.